The primary structure comprises 2030 residues: Dedicator of cytokinesis protein 3 (2030 aa).

The 62-residue stretch at 6-67 folds into the SH3 domain; sequence EEEKYGVVIC…PANYIHLKKA (62 aa). Residues 421–599 enclose the C2 DOCK-type domain; it reads RNDLYLTLEK…ESFFISTQLS (179 aa). In terms of domain architecture, DOCKER spans 1228 to 1635; sequence KSEINKEEMY…LYHEFPGLDK (408 aa). 4 disordered regions span residues 1641–1662, 1734–1771, 1849–1927, and 1951–2030; these read SGTS…PESI, SSSQ…SLPD, DTPP…ADED, and QPCR…RGEQ. Ser-1658 bears the Phosphoserine mark. Over residues 1734 to 1754 the composition is skewed to low complexity; the sequence is SSSQASPSSSSLSSTHSAPSQ. Over residues 1755–1765 the composition is skewed to polar residues; that stretch reads MITSAPSSARG. Positions 1880-1902 are enriched in low complexity; that stretch reads GSNSTLSGSASSGVSSLSESNFG. Positions 1967–1977 are enriched in pro residues; that stretch reads PMDPPALPPKP. An SH3-binding motif is present at residues 1970-1976; sequence PPALPPK. 2 stretches are compositionally biased toward basic and acidic residues: residues 1984 to 2001 and 2014 to 2030; these read ALEH…ERPR and AKEE…RGEQ.

It belongs to the DOCK family. In terms of assembly, interacts with presenilin proteins PSEN1 and PSEN2. Interacts with CRK. In normal brains, it is localized in the neuropil, and occasionally in the pyramidal cells, while in Alzheimer disease brains, it is associated with neurofibrillary tangles.

It is found in the cytoplasm. In terms of biological role, potential guanine nucleotide exchange factor (GEF). GEF proteins activate some small GTPases by exchanging bound GDP for free GTP. Its interaction with presenilin proteins as well as its ability to stimulate Tau/MAPT phosphorylation suggest that it may be involved in Alzheimer disease. Ectopic expression in nerve cells decreases the secretion of amyloid-beta APBA1 protein and lowers the rate of cell-substratum adhesion, suggesting that it may affect the function of some small GTPase involved in the regulation of actin cytoskeleton or cell adhesion receptors. The polypeptide is Dedicator of cytokinesis protein 3 (DOCK3) (Homo sapiens (Human)).